Consider the following 349-residue polypeptide: Heparin sulfate O-sulfotransferase (349 aa).

Residues 1–17 (MFRKLLKMWILLRPTHW) are Cytoplasmic-facing. Residues 18–38 (LILIALCAVTCAGYWLLWSEI) traverse the membrane as a helical; Signal-anchor for type II membrane protein segment. At 39–349 (RLEHAFKPLS…KFMYEKIRPK (311 aa)) the chain is on the lumenal side. 2 N-linked (GlcNAc...) asparagine glycosylation sites follow: N107 and N126. Catalysis depends on residues H139 and H141. Cystine bridges form between C200–C208 and C221–C227. N-linked (GlcNAc...) asparagine glycosylation occurs at N282.

The protein belongs to the sulfotransferase 3 family. As to quaternary structure, homotrimer.

It is found in the golgi apparatus membrane. In terms of biological role, catalyzes the transfer of sulfate to the C2-position of selected hexuronic acid residues within the maturing heparan sulfate (HS). In Drosophila melanogaster (Fruit fly), this protein is Heparin sulfate O-sulfotransferase.